The following is a 459-amino-acid chain: Carbonic anhydrase 9 (459 aa).

An N-terminal signal peptide occupies residues 1–37; that stretch reads MAPLCPSPWLPLLIPAPAPGLTVQLLLSLLLLVPVHP. The proteoglycan-like (PG) stretch occupies residues 38–112; sequence QRLPRMQEDS…EEEGSLKLED (75 aa). The Extracellular portion of the chain corresponds to 38–414; the sequence is QRLPRMQEDS…QLNSCLAAGD (377 aa). Positions 42–154 are disordered; sequence RMQEDSPLGG…GDPPWPRVSP (113 aa). Residues 55 to 95 are compositionally biased toward acidic residues; that stretch reads GEDDPLGEEDLPSEEDSPREEDPPGEEDLPGEEDLPGEEDL. Basic and acidic residues predominate over residues 96-112; that stretch reads PEVKPKSEEEGSLKLED. The O-linked (GlcNAc...) threonine glycan is linked to Thr-115. Positions 129-140 are enriched in basic and acidic residues; the sequence is AHRDKEGDDQSH. The catalytic stretch occupies residues 138–391; it reads QSHWRYGGDP…NGRVIEASFP (254 aa). The Alpha-carbonic anhydrase domain occupies 139–390; the sequence is SHWRYGGDPP…LNGRVIEASF (252 aa). An intrachain disulfide couples Cys-156 to Cys-336. His-200 acts as the Proton donor/acceptor in catalysis. Zn(2+) is bound by residues His-226, His-228, and His-251. 332–333 is a substrate binding site; it reads TT. Residue Asn-346 is glycosylated (N-linked (GlcNAc...) asparagine). The chain crosses the membrane as a helical span at residues 415-435; that stretch reads ILALVFGLLFAVTSVAFLVQM. Residues 436–459 are Cytoplasmic-facing; it reads RRQHRRGTKGGVSYRPAEVAETGA. The residue at position 449 (Tyr-449) is a Phosphotyrosine.

This sequence belongs to the alpha-carbonic anhydrase family. Forms oligomers linked by disulfide bonds. Zn(2+) is required as a cofactor. In terms of processing, asn-346 bears high-mannose type glycan structures. Expressed primarily in carcinoma cells lines. Expression is restricted to very few normal tissues and the most abundant expression is found in the epithelial cells of gastric mucosa.

The protein resides in the nucleus. Its subcellular location is the nucleolus. It is found in the cell membrane. The protein localises to the cell projection. It localises to the microvillus membrane. It catalyses the reaction hydrogencarbonate + H(+) = CO2 + H2O. Inhibited by coumarins, saccharin, sulfonamide derivatives such as acetazolamide (AZA) and Foscarnet (phosphonoformate trisodium salt). Catalyzes the interconversion between carbon dioxide and water and the dissociated ions of carbonic acid (i.e. bicarbonate and hydrogen ions). The protein is Carbonic anhydrase 9 (CA9) of Homo sapiens (Human).